Consider the following 344-residue polypeptide: MSNTQLSYKDAGVDIHAGNELVERIKGDVKRTNRSEVMGGLGGFGALCALPTKYKEPILVSGTDGVGTKLRLAIDLKKHDTIGQDLVAMCVNDLIVQGAEPLFFLDYYATGKLDVDVAASVIKGIAYGCEMSGCALVGGETAEMPGMYHEGDYDLAGFCVGVVEKSEIIDGTAVKTGDTLIALGSSGAHSNGYSLIRKVLEVSGANPADLLEGKPLSEHFLAPTKIYVKSILQLIKQTEVHAIAHLTGGGFWENIPRVLPDNTKAVIDESSWQWPAIFNWLQEKGNISRYEMYRTFNCGVGMVIALPEKEVETALALLEQSGEKAWVIGKIEHLGEGEAQVEIQ.

The protein belongs to the AIR synthase family.

It is found in the cytoplasm. It carries out the reaction 2-formamido-N(1)-(5-O-phospho-beta-D-ribosyl)acetamidine + ATP = 5-amino-1-(5-phospho-beta-D-ribosyl)imidazole + ADP + phosphate + H(+). It functions in the pathway purine metabolism; IMP biosynthesis via de novo pathway; 5-amino-1-(5-phospho-D-ribosyl)imidazole from N(2)-formyl-N(1)-(5-phospho-D-ribosyl)glycinamide: step 2/2. In Haemophilus influenzae (strain PittEE), this protein is Phosphoribosylformylglycinamidine cyclo-ligase.